Consider the following 899-residue polypeptide: MARKDKDNGPEFVPLTNRSHRSSASFSSTDSLSSDGSLFGDDDVNALHSQKITRTQLPEENPYRDDDVELERGDNIFSRPTENSKRNRGSRLIWVVGLLCLGGWILAFVLFWGRRNSELSSSIAAVHGADSATGSTSYGKPLTLDGVLNGSWGRRRHSISWVAGPNGQDGLLLERDEDEKKAYLRVESIHSRQNQTDAREGWVLMESGAFAVNGKSLQPSATWPSPDFKSVLVAANAVSNWRHSFTATYWLFDVDTQTAQPLDPDEPKGRIQLASWSPQSDAVVFTRDNNLYLRKLDSDKVSQLTKDGGKDVFNGVPDWVYEEEVFGTDSTTWWSKDGKYVAFLRTNESMVPEFPIEYYMSRPSGKKPPAGLDKYPDVRKIKYPKAGSPNPVVTLQFYDIENAEVFSVNVSGGFADDDRLITEVVWASSGKVLVKEFNRESDVIRTVLIDVPSRTGELVRVDNFAQDDGGWAEVTQSTTFIPADPANGRPDDGYIDIIVHDGYDHWGYFTPVNNSVPVLLTSGPWEVVDTEPAVDLANNIVYFVASKESPTQRHVYSVKLDGSDLQPLTDVTKAGYYDASFSIGGGYVLLSYDGPRVPWQKVINTPSNQNPFEEIIEQNEQLSKMIEKYALPAEIYQNITIDNVTLQVVERRPPHFNPVKKYPVLFWLYGGPGSQSVDRRFSVDFQSYVASTLGYIVVTVDGRGTGHIGRAARTIVRGNLGYWEARDQIETAKAWAKKPYVDKDHIAIWGWSYGGFMTLKTLEQDAGQTFQYGMAVSPVTDWRFYDSIYTERYMHTPEHNPTGYEHSAISNMTALQQNVRFLVMHGTADDNVHFQNTLSLIDKLDMAGVENYDVHVYPDSDHSIYFHNAHKMVYDRLSSWLVTAFTDGWQQGNSVLPVT.

Disordered regions lie at residues Met1–Ser37 and Lys51–Ser84. The Cytoplasmic segment spans residues Met1–Arg91. Residues Ser22–Ser37 show a composition bias toward low complexity. Basic and acidic residues predominate over residues Asn61–Asp74. The helical; Signal-anchor for type II membrane protein transmembrane segment at Leu92–Trp112 threads the bilayer. Over Gly113–Thr899 the chain is Vacuolar. N-linked (GlcNAc...) asparagine glycosylation is found at Asn149, Asn194, Asn347, Asn409, Asn513, Asn638, and Asn643. Ser752 (charge relay system) is an active-site residue. An N-linked (GlcNAc...) asparagine glycan is attached at Asn811. Residues Asp829 and His862 each act as charge relay system in the active site.

This sequence belongs to the peptidase S9B family.

The protein resides in the vacuole membrane. The enzyme catalyses Release of an N-terminal dipeptide, Xaa-Yaa-|-Zaa-, from a polypeptide, preferentially when Yaa is Pro, provided Zaa is neither Pro nor hydroxyproline.. Functionally, type IV dipeptidyl-peptidase which removes N-terminal dipeptides sequentially from polypeptides having unsubstituted N-termini provided that the penultimate residue is proline. The protein is Probable dipeptidyl-aminopeptidase B (dapB) of Talaromyces marneffei (strain ATCC 18224 / CBS 334.59 / QM 7333) (Penicillium marneffei).